The sequence spans 115 residues: Con-Ins G1b (115 aa).

The N-terminal stretch at 1–24 is a signal peptide; the sequence is MTTSFYFLLMALGLLLYVCQSSFG. Residues 25–29 constitute a propeptide that is removed on maturation; it reads NQHTR. The residue at position 34 (Pro34) is a 4-hydroxyproline; partial. Intrachain disulfides connect Cys38–Cys101, Cys50–Cys114, and Cys100–Cys105. The residue at position 41 (Glu41) is a 4-carboxyglutamate. Residues 52–94 constitute a propeptide, c peptide; that stretch reads RKRNDAGEKRGRASPLWQRRGFLSKLKARAKRNGAFHLPRDGR. The residue at position 98 (Glu98) is a 4-carboxyglutamate. At Pro104 the chain carries 4-hydroxyproline; partial. At Glu109 the chain carries 4-carboxyglutamate; partial. Position 114 is a cysteine amide (Cys114).

This sequence belongs to the insulin family. In terms of assembly, heterodimer of A and B chains; disulfide-linked. Expressed by the venom gland.

Its subcellular location is the secreted. Its function is as follows. This venom insulin, from a fish-hunting cone snail, facilitates prey capture by rapidly inducing hypoglycemic shock. It is one of the smallest known insulin found in nature and lacks the C-terminal segment of the B chain that, in human insulin, mediates engagement of the insulin receptor (INSR) and assembly of the hormone's hexameric storage form. Despite lacking this segment, it both binds and activates human insulin receptor (long isoform (HIR-B) of INSR) with only a 10-fold lower potency. In vivo, intraperitoneal injection of this peptide into zebrafish lowers blood glucose with the same potency than human insulin. In addition, when applied to water, this peptide reduces overall locomotor activity of zebrafish larvae, observed as a significant decrease in the percentage of time spent swimming and movement frequency. This chain is Con-Ins G1b, found in Conus geographus (Geography cone).